We begin with the raw amino-acid sequence, 236 residues long: Probable transcriptional regulatory protein UUR10_0292 (236 aa).

This sequence belongs to the TACO1 family.

Its subcellular location is the cytoplasm. The protein is Probable transcriptional regulatory protein UUR10_0292 of Ureaplasma urealyticum serovar 10 (strain ATCC 33699 / Western).